We begin with the raw amino-acid sequence, 190 residues long: Threonylcarbamoyl-AMP synthase (190 aa).

In terms of domain architecture, YrdC-like spans 7-190 (GDAIAAAIDV…ALTGELFRQG (184 aa)).

It belongs to the SUA5 family. TsaC subfamily.

It localises to the cytoplasm. The catalysed reaction is L-threonine + hydrogencarbonate + ATP = L-threonylcarbamoyladenylate + diphosphate + H2O. In terms of biological role, required for the formation of a threonylcarbamoyl group on adenosine at position 37 (t(6)A37) in tRNAs that read codons beginning with adenine. Catalyzes the conversion of L-threonine, HCO(3)(-)/CO(2) and ATP to give threonylcarbamoyl-AMP (TC-AMP) as the acyladenylate intermediate, with the release of diphosphate. In Shigella dysenteriae serotype 1 (strain Sd197), this protein is Threonylcarbamoyl-AMP synthase.